The sequence spans 265 residues: Glutamate racemase (265 aa).

Substrate is bound by residues 7-8 (DS) and 39-40 (YG). The Proton donor/acceptor role is filled by C70. 71-72 (NT) lines the substrate pocket. The active-site Proton donor/acceptor is the C177.

Belongs to the aspartate/glutamate racemases family.

It catalyses the reaction L-glutamate = D-glutamate. It participates in cell wall biogenesis; peptidoglycan biosynthesis. Its function is as follows. Provides the (R)-glutamate required for cell wall biosynthesis. The chain is Glutamate racemase from Prochlorococcus marinus (strain NATL1A).